The chain runs to 140 residues: Pro-variola growth factor (140 aa).

The signal sequence occupies residues 1–18 (MSMKYLMLLFAAMIIRSF). At 19 to 100 (ANSGNAIETT…SEKPNTTTSY (82 aa)) the chain is on the extracellular side. A glycan (N-linked (GlcNAc...) asparagine; by host) is linked at asparagine 34. The EGF-like domain maps to 41–81 (AIRLCGPEGDRYCFHGICIHARDIDGMYCRCSHGYTGIRCQ). 3 disulfides stabilise this stretch: cysteine 45–cysteine 58, cysteine 53–cysteine 69, and cysteine 71–cysteine 80. Asparagine 95 is a glycosylation site (N-linked (GlcNAc...) asparagine; by host). A helical transmembrane segment spans residues 101–121 (IPSPGIVLVLLVSIIVCCLLF). Residues 122–140 (VYRFTRRTNKLPLQDMVVP) are Cytoplasmic-facing.

This sequence belongs to the orthopoxvirus OPG019 family. Variola growth factor interacts with host EGFR and promotes EGFR dimerization.

The protein resides in the host membrane. The protein localises to the secreted. In terms of biological role, stimulates cellular proliferation (hyperplasia)and mobility around infected cells to promote rapid and efficient spread of infection. This effect is beneficial for virus replication in vivo, because poxviruses replicate possibly better in proliferating cells than in quiescent cells. Acts by binding host EGFR, inducing its dimerization, autophosphorylation and leading to activation of several cellular pathways regulating cell proliferation or cell survival. The activation by host EGFR of mitogen activated protein kinases (MAPK) and extracellular-signal regulated kinases (ERK) are essential for the positive effect of vaccinia growth factor on poxvirus virulence in vivo. The sequence is that of Pro-variola growth factor (OPG019) from Variola virus (isolate Human/India/Ind3/1967) (VARV).